A 189-amino-acid polypeptide reads, in one-letter code: Interferon alpha-12 (189 aa).

The first 23 residues, 1 to 23 (MARLCAFLMTLLVMSYWSTCSLG), serve as a signal peptide directing secretion. Disulfide bonds link Cys-24–Cys-122 and Cys-52–Cys-162. The N-linked (GlcNAc...) asparagine glycan is linked to Asn-101.

It belongs to the alpha/beta interferon family.

It localises to the secreted. Functionally, produced by macrophages, IFN-alpha have antiviral activities. Interferon stimulates the production of two enzymes: a protein kinase and an oligoadenylate synthetase. This chain is Interferon alpha-12 (Ifna12), found in Mus musculus (Mouse).